The sequence spans 293 residues: Ribosomal protein L11 methyltransferase (293 aa).

S-adenosyl-L-methionine contacts are provided by Thr-145, Gly-166, Asp-188, and Asn-230.

This sequence belongs to the methyltransferase superfamily. PrmA family.

It is found in the cytoplasm. It carries out the reaction L-lysyl-[protein] + 3 S-adenosyl-L-methionine = N(6),N(6),N(6)-trimethyl-L-lysyl-[protein] + 3 S-adenosyl-L-homocysteine + 3 H(+). Methylates ribosomal protein L11. This is Ribosomal protein L11 methyltransferase from Salmonella arizonae (strain ATCC BAA-731 / CDC346-86 / RSK2980).